Consider the following 349-residue polypeptide: Dihydroorotate dehydrogenase (quinone) (349 aa).

FMN contacts are provided by residues alanine 65–lysine 69 and alanine 89. Lysine 69 is a binding site for substrate. Substrate is bound at residue asparagine 114 to phenylalanine 118. Residues asparagine 143 and asparagine 176 each contribute to the FMN site. Asparagine 176 contacts substrate. Residue serine 179 is the Nucleophile of the active site. Asparagine 181 contacts substrate. 2 residues coordinate FMN: lysine 212 and threonine 240. Asparagine 241–threonine 242 contributes to the substrate binding site. Residues threonine 244–proline 265 form a disordered region. Residues glutamate 245–alanine 255 are compositionally biased toward basic and acidic residues. FMN contacts are provided by residues glycine 263, glycine 290, and tyrosine 311–threonine 312.

This sequence belongs to the dihydroorotate dehydrogenase family. Type 2 subfamily. Monomer. FMN is required as a cofactor.

It localises to the cell membrane. It catalyses the reaction (S)-dihydroorotate + a quinone = orotate + a quinol. It functions in the pathway pyrimidine metabolism; UMP biosynthesis via de novo pathway; orotate from (S)-dihydroorotate (quinone route): step 1/1. Catalyzes the conversion of dihydroorotate to orotate with quinone as electron acceptor. In Halobacterium salinarum (strain ATCC 29341 / DSM 671 / R1), this protein is Dihydroorotate dehydrogenase (quinone).